A 120-amino-acid polypeptide reads, in one-letter code: MFLLYEYDIFWAFLIISSVIPILAFXISGILAPISKGPEKLSSYESGIEPMGDAWLQFRIRYYMFALVFVVFDVETVFLYPWAMSFDVLGVSVFIEALIFVLILIVGLVYAWRKGALEWS.

A run of 3 helical transmembrane segments spans residues 9–29 (IFWA…XISG), 64–84 (MFAL…PWAM), and 88–108 (VLGV…IVGL).

The protein belongs to the complex I subunit 3 family. As to quaternary structure, NDH is composed of at least 16 different subunits, 5 of which are encoded in the nucleus.

The protein resides in the plastid. It is found in the chloroplast thylakoid membrane. It carries out the reaction a plastoquinone + NADH + (n+1) H(+)(in) = a plastoquinol + NAD(+) + n H(+)(out). It catalyses the reaction a plastoquinone + NADPH + (n+1) H(+)(in) = a plastoquinol + NADP(+) + n H(+)(out). NDH shuttles electrons from NAD(P)H:plastoquinone, via FMN and iron-sulfur (Fe-S) centers, to quinones in the photosynthetic chain and possibly in a chloroplast respiratory chain. The immediate electron acceptor for the enzyme in this species is believed to be plastoquinone. Couples the redox reaction to proton translocation, and thus conserves the redox energy in a proton gradient. The polypeptide is NAD(P)H-quinone oxidoreductase subunit 3, chloroplastic (Eucalyptus globulus subsp. globulus (Tasmanian blue gum)).